The sequence spans 90 residues: Serine protease inhibitor Cvsi-1 (90 aa).

Residues 1 to 19 (MDVVRTLILCVCLFGLTFA) form the signal peptide.

Post-translationally, contains 6 disulfide bonds. In terms of tissue distribution, detected in hemolymph (at protein level). In oysters collected in the summer the expression level is highest in the digestive gland with low levels of expression in gill, mantle, labial palp, style-sac midgut, gonad, heart, and hemocyte. In winter expression levels are higher in all tissues with highest expression levels observed in the digestive gland. Within the digestive gland expression is limited to the basophil cells of the digestive diverticula.

It is found in the secreted. Slow-binding inhibitor of serine proteases. The inhibitor rapidly binds to the protease forming a weak enzyme-inhibitor complex, and this is followed by a slow isomerization forming a tight-binding enzyme-inhibitor complex. Active against subtilisin A, perkinsin and trypsin with dissociation constants of 0.29 nM, 13.7 nM and 17.7 nM respectively. Not active against thermolysin, papain or pepsin. Has antiparasitic activity against the protozoan P.marinus. This chain is Serine protease inhibitor Cvsi-1, found in Crassostrea virginica (Eastern oyster).